The following is a 329-amino-acid chain: MLSPLNVLQFNFRGETALSDSAPLQTVSFAGKDYSMEPIDEKTPILFQWFEARPERYGKGEVPILNTKEHPYLSNIINAAKIENERVIGVLVDGDFTYEQRKEFLSLEDEHQNIKIIYRENVDFSMYDKKLSDIYLENIHEQESYPASERDNYLLGLLREELKNIPYGKDSLIESYAEKRGHTWFDFFRNLAVLKGGGLFTETGKTGCHNISPCGGCIYLDADMIITDKLGVLYAPDGIAVYVDCNDNRKSLENGAIVVNRSNHPALLAGLDIMKSKVDAHPYYDGVGKGLKRHFNYSSLQDYNVFCNFIEFKHKNIIPNTSMYTNSSW.

N-beta-linked (GlcNAc) arginine; by autocatalysis glycosylation is present at Arg-13. 48–50 (QWF) contacts UDP-N-acetyl-alpha-D-glucosamine. An N-beta-linked (GlcNAc) arginine; by autocatalysis glycan is attached at Arg-53. Tyr-72 serves as a coordination point for UDP-N-acetyl-alpha-D-glucosamine. N-beta-linked (GlcNAc) arginine; by autocatalysis glycosylation is present at Arg-159. 219 to 222 (YLDA) serves as a coordination point for UDP-N-acetyl-alpha-D-glucosamine. Positions 221-223 (DAD) match the DXD motif motif. Asp-223 serves as a coordination point for Mn(2+). Glu-253 acts as the Proton acceptor in catalysis. Arg-293 carries N-beta-linked (GlcNAc) arginine; by autocatalysis glycosylation. Mn(2+) is bound by residues Asn-320 and Ser-322. UDP-N-acetyl-alpha-D-glucosamine contacts are provided by residues Ser-322 and 327 to 329 (SSW).

The protein belongs to the glycosyltransferase NleB family. Mn(2+) is required as a cofactor. Post-translationally, auto-glycosylated: arginine GlcNAcylation is required for activity toward death domain-containing host target proteins.

The protein resides in the secreted. It localises to the host cell. It carries out the reaction L-arginyl-[protein] + UDP-N-acetyl-alpha-D-glucosamine = N(omega)-(N-acetyl-beta-D-glucosaminyl)-L-arginyl-[protein] + UDP + H(+). Protein-arginine N-acetylglucosaminyltransferase effector that disrupts TNF signaling in infected cells, including NF-kappa-B signaling, apoptosis and necroptosis. Acts by catalyzing the transfer of a single N-acetylglucosamine (GlcNAc) to a conserved arginine residue in the death domain of host proteins FADD, TNFRSF1A and RIPK1: arginine GlcNAcylation prevents homotypic/heterotypic death domain interactions and assembly of the oligomeric TNF-alpha receptor complex, thereby disrupting TNF signaling. Has preference for host FADD as substrate compared to TNFRSF1A and RIPK1. Also acts on host proteins without a death domain: catalyzes GlcNAcylation of host GAPDH protein, thereby preventing GAPDH interaction with TRAF2 and TRAF3, leading to inhibit NF-kappa-B signaling and type I interferon production, respectively. Also displays intra-bacterial activity by mediating GlcNAcylation of glutathione synthetase GshB. Catalyzes auto-GlcNAcylation, which is required for activity toward death domain-containing host target proteins. The polypeptide is Protein-arginine N-acetylglucosaminyltransferase NleB (Citrobacter rodentium).